We begin with the raw amino-acid sequence, 180 residues long: UPF0227 protein YcfP (180 aa).

This sequence belongs to the UPF0227 family.

The protein is UPF0227 protein YcfP of Salmonella gallinarum (strain 287/91 / NCTC 13346).